The following is a 398-amino-acid chain: Phosphoglycerate kinase (398 aa).

Residues aspartate 23–asparagine 25, arginine 38, histidine 61–arginine 64, arginine 119, and arginine 152 each bind substrate. ATP contacts are provided by residues lysine 202, glutamate 324, and glycine 354–threonine 357.

The protein belongs to the phosphoglycerate kinase family. As to quaternary structure, monomer.

The protein localises to the cytoplasm. The enzyme catalyses (2R)-3-phosphoglycerate + ATP = (2R)-3-phospho-glyceroyl phosphate + ADP. Its pathway is carbohydrate degradation; glycolysis; pyruvate from D-glyceraldehyde 3-phosphate: step 2/5. This chain is Phosphoglycerate kinase, found in Rhodopseudomonas palustris (strain ATCC BAA-98 / CGA009).